A 678-amino-acid chain; its full sequence is DNA ligase (678 aa).

NAD(+) contacts are provided by residues 47–51 (DSDYD), 96–97 (SL), and glutamate 122. Catalysis depends on lysine 124, which acts as the N6-AMP-lysine intermediate. Arginine 145, glutamate 182, lysine 300, and lysine 324 together coordinate NAD(+). Residues cysteine 418, cysteine 421, cysteine 436, and cysteine 442 each coordinate Zn(2+). Residues 602 to 678 (AYNESFTGKT…ILEDNLKDLL (77 aa)) form the BRCT domain.

The protein belongs to the NAD-dependent DNA ligase family. LigA subfamily. The cofactor is Mg(2+). Mn(2+) is required as a cofactor.

It carries out the reaction NAD(+) + (deoxyribonucleotide)n-3'-hydroxyl + 5'-phospho-(deoxyribonucleotide)m = (deoxyribonucleotide)n+m + AMP + beta-nicotinamide D-nucleotide.. Functionally, DNA ligase that catalyzes the formation of phosphodiester linkages between 5'-phosphoryl and 3'-hydroxyl groups in double-stranded DNA using NAD as a coenzyme and as the energy source for the reaction. It is essential for DNA replication and repair of damaged DNA. The sequence is that of DNA ligase from Francisella tularensis subsp. holarctica (strain LVS).